The chain runs to 262 residues: Type III pantothenate kinase (262 aa).

Asp6–Val13 lines the ATP pocket. Substrate-binding positions include Tyr100 and Gly107–Arg110. Asp109 acts as the Proton acceptor in catalysis. Asp129 is a K(+) binding site. Position 132 (Thr132) interacts with ATP. Thr184 is a binding site for substrate.

It belongs to the type III pantothenate kinase family. Homodimer. The cofactor is NH4(+). It depends on K(+) as a cofactor.

The protein localises to the cytoplasm. It carries out the reaction (R)-pantothenate + ATP = (R)-4'-phosphopantothenate + ADP + H(+). The protein operates within cofactor biosynthesis; coenzyme A biosynthesis; CoA from (R)-pantothenate: step 1/5. In terms of biological role, catalyzes the phosphorylation of pantothenate (Pan), the first step in CoA biosynthesis. The polypeptide is Type III pantothenate kinase (Bacillus cereus (strain B4264)).